A 209-amino-acid polypeptide reads, in one-letter code: Casparian strip membrane protein 1 (209 aa).

The Cytoplasmic portion of the chain corresponds to M1–K46. The helical transmembrane segment at G47–A67 threads the bilayer. The Extracellular segment spans residues T68–A95. Residues F96–F116 traverse the membrane as a helical segment. At S117 to D137 the chain is on the cytoplasmic side. The helical transmembrane segment at T138 to A158 threads the bilayer. The Extracellular portion of the chain corresponds to H159 to G183. Residues A184 to L204 form a helical membrane-spanning segment. The Cytoplasmic portion of the chain corresponds to A205–H209.

Belongs to the Casparian strip membrane proteins (CASP) family. As to quaternary structure, homodimer and heterodimers.

The protein resides in the cell membrane. Functionally, regulates membrane-cell wall junctions and localized cell wall deposition. Required for establishment of the Casparian strip membrane domain (CSD) and the subsequent formation of Casparian strips, a cell wall modification of the root endodermis that determines an apoplastic barrier between the intraorganismal apoplasm and the extraorganismal apoplasm and prevents lateral diffusion. The protein is Casparian strip membrane protein 1 of Vitis vinifera (Grape).